Consider the following 252-residue polypeptide: D-aminoacyl-tRNA deacylase (252 aa).

The protein belongs to the DtdA deacylase family. Monomer. Zn(2+) is required as a cofactor.

The catalysed reaction is a D-aminoacyl-tRNA + H2O = a tRNA + a D-alpha-amino acid + H(+). It catalyses the reaction glycyl-tRNA(Ala) + H2O = tRNA(Ala) + glycine + H(+). In terms of biological role, D-aminoacyl-tRNA deacylase with broad substrate specificity. By recycling D-aminoacyl-tRNA to D-amino acids and free tRNA molecules, this enzyme counteracts the toxicity associated with the formation of D-aminoacyl-tRNA entities in vivo. This chain is D-aminoacyl-tRNA deacylase, found in Pyrobaculum arsenaticum (strain DSM 13514 / JCM 11321 / PZ6).